Reading from the N-terminus, the 519-residue chain is MNLHPHLRHSLLASALLLASGLATAAEPQVIAKELQQAKTYTVASAPIEPLQMDPPKLPDLTGFTAEAVQKKIDRRHKGKVSLRRMFQEDTLKEFVGGDNKAAEWVQRQHGIPQAIFVDDGHVDLTELSKKVPKQYFSEVEPGVYLARLPIVVGQKGILEIDGKVKQLRLSQEGGAFLVNDGKLFVTDTQVTGWREKDNGPATFRSPKEFRPFLLSWGGTETYIVNTKMASFGYAKSKSYGVSISQYTPNMAKRMGRPEPTGWIIGSEFSDMWYGFYCYETQDFVIKDSTYRDNIVYGIDPHDRSHRLIIAGNTVYGTKKKHGIIVSREVNDSWIINNKSYDNKLSGVVIDRNSVNNLVAYNEIYRNHTDGITLYESGDNLIWGNKLVNNRRHGIRVRNSVNIRLYENVAMANGLVGVYGHIKDLSDTDRDIALDPFDTKVSLIVVGGELSANGSGPLSIDSPLSVELYKVSMLAPRKASGISLNGVLGERQDEILDLLVRQQKAVLIDPVERQTEMID.

Positions 1–25 are cleaved as a signal peptide; the sequence is MNLHPHLRHSLLASALLLASGLATA. PbH1 repeat units follow at residues 219 to 246, 281 to 303, 305 to 328, 330 to 352, 354 to 376, and 377 to 399; these read GTET…SISQ, TQDF…DPHD, SHRL…IVSR, VNDS…VIDR, SVNN…TLYE, and SGDN…RVRN. The Proton acceptor role is filled by H302.

Belongs to the D-mannuronate C5-epimerase family.

Its subcellular location is the periplasm. The enzyme catalyses [(1-&gt;4)-beta-D-mannuronosyl](n) = [alginate](n). It functions in the pathway glycan biosynthesis; alginate biosynthesis. Functionally, catalyzes the epimerization of beta-D-mannuronate to alpha-L-guluronate during the synthesis of the linear polysaccharide alginate. In addition, is part of a periplasmic protein complex that protects alginate from degradation by AlgL by channeling the newly formed alginate polymer through a scaffold that transfers the alginate polymer through the periplasmic space to the outer membrane secretin AlgE. The polypeptide is Mannuronan C5-epimerase (algG) (Pseudomonas putida (strain ATCC 47054 / DSM 6125 / CFBP 8728 / NCIMB 11950 / KT2440)).